The following is a 460-amino-acid chain: Argininosuccinate lyase (460 aa).

The protein belongs to the lyase 1 family. Argininosuccinate lyase subfamily.

It is found in the cytoplasm. The catalysed reaction is 2-(N(omega)-L-arginino)succinate = fumarate + L-arginine. It participates in amino-acid biosynthesis; L-arginine biosynthesis; L-arginine from L-ornithine and carbamoyl phosphate: step 3/3. In Alteromonas mediterranea (strain DSM 17117 / CIP 110805 / LMG 28347 / Deep ecotype), this protein is Argininosuccinate lyase.